A 315-amino-acid chain; its full sequence is Mitochondrial outer membrane import complex protein METAXIN (315 aa).

At methionine 1 the chain carries N-acetylmethionine. Residues 157–181 are a coiled coil; that stretch reads ENAEQREKQIYKRASEAYEALSTRL. A helical membrane pass occupies residues 195–215; that stretch reads LDAFLLSHILFIIQALPVTSV. The tract at residues 240-277 is disordered; the sequence is ASSSSPSPPLHSFPSSFPRKSSKPKSKPKVEKTEEEKK. Residues 267–277 show a composition bias toward basic and acidic residues; it reads PKVEKTEEEKK. Residues 284-304 form a helical membrane-spanning segment; the sequence is FFLAAQFLAVVIYVSVMGGGS.

This sequence belongs to the metaxin family. As to quaternary structure, part of a high molecular weight complex that is distinct from the TOM complex. Interacts with a variety of mitochondrial precursor proteins. In terms of tissue distribution, expressed in roots, young cotyledons, flowers and leaves.

The protein localises to the mitochondrion inner membrane. Its subcellular location is the mitochondrion outer membrane. Functionally, involved in transport of proteins into the mitochondrion. This Arabidopsis thaliana (Mouse-ear cress) protein is Mitochondrial outer membrane import complex protein METAXIN (MTX1).